The primary structure comprises 144 residues: Bacilliredoxin SH1478 (144 aa).

This sequence belongs to the bacilliredoxin family.

The polypeptide is Bacilliredoxin SH1478 (Staphylococcus haemolyticus (strain JCSC1435)).